The primary structure comprises 211 residues: Outer surface protein C (211 aa).

Residues 1–18 form the signal peptide; sequence MKKNTLSAILMTLFLFIS. C19 carries N-palmitoyl cysteine lipidation. Residue C19 is the site of S-diacylglycerol cysteine attachment.

Belongs to the OspC lipoprotein family. Homodimer. Interacts with tick I.ricinus salivary protein Iric-1, Iric-2 and Iric-3. Binds human (host) plasminogen.

Its subcellular location is the cell outer membrane. It is found in the cell surface. Its function is as follows. Major immunodominant protein in mammalian hosts. Required for initial stages of mammalian infection. Inhibits macrophage-mediated phagocytosis of the bacteria. Binds human plasminogen; this probably confers an extracellular protease activity on the bacteria that allows it to traverse tissue. Interaction with tick I.ricinus salivary protein Salp15 protects the bacteria from antibody-mediated killing in vitro and in vivo. In Borreliella burgdorferi (Lyme disease spirochete), this protein is Outer surface protein C.